Reading from the N-terminus, the 344-residue chain is N-acetyl-gamma-glutamyl-phosphate reductase (344 aa).

Cys-149 is a catalytic residue.

It belongs to the NAGSA dehydrogenase family. Type 1 subfamily.

It is found in the cytoplasm. The enzyme catalyses N-acetyl-L-glutamate 5-semialdehyde + phosphate + NADP(+) = N-acetyl-L-glutamyl 5-phosphate + NADPH + H(+). The protein operates within amino-acid biosynthesis; L-arginine biosynthesis; N(2)-acetyl-L-ornithine from L-glutamate: step 3/4. Its function is as follows. Catalyzes the NADPH-dependent reduction of N-acetyl-5-glutamyl phosphate to yield N-acetyl-L-glutamate 5-semialdehyde. This chain is N-acetyl-gamma-glutamyl-phosphate reductase, found in Thermoanaerobacter sp. (strain X514).